Here is a 565-residue protein sequence, read N- to C-terminus: Heme/hemopexin transporter protein HuxB (565 aa).

Positions 1–26 (MKMRPRYSVIASAVSLGFVLSKSVMA) are cleaved as a signal peptide. Positions 73-150 (FPLTQVQILD…GTVKILLLKG (78 aa)) constitute a POTRA domain.

Belongs to the TPS (TC 1.B.20) family.

It localises to the cell outer membrane. Its function is as follows. Likely functions in the release of soluble HxuA from the cell. Probable member of a two partner secretion pathway (TPS) in which it mediates the secretion of HuxA. The sequence is that of Heme/hemopexin transporter protein HuxB (hxuB) from Haemophilus influenzae (strain 86-028NP).